We begin with the raw amino-acid sequence, 473 residues long: Cysteine--tRNA ligase (473 aa).

Cysteine 27 contacts Zn(2+). The 'HIGH' region signature appears at 29–39 (ITPYDHMHVGH). 3 residues coordinate Zn(2+): cysteine 213, histidine 238, and glutamate 242. Residues 271-275 (KMSKS) carry the 'KMSKS' region motif. Lysine 274 contributes to the ATP binding site.

Belongs to the class-I aminoacyl-tRNA synthetase family. Requires Zn(2+) as cofactor.

The protein localises to the cytoplasm. The enzyme catalyses tRNA(Cys) + L-cysteine + ATP = L-cysteinyl-tRNA(Cys) + AMP + diphosphate. The polypeptide is Cysteine--tRNA ligase (Pyrobaculum islandicum (strain DSM 4184 / JCM 9189 / GEO3)).